The chain runs to 596 residues: Probable protein S-acyltransferase 22 (596 aa).

2 helical membrane passes run 15-35 (VVAVAVFLALGFAFYVFFAPF) and 44-64 (IAMGIYTPLITCVVGLYIWCA). The segment at 102 to 125 (TGGAKSHDGTCVEDTENGSNKKLE) is disordered. The DHHC domain occupies 163–213 (FYCSLCEVEVFKYSKHCRVCDKCVDRFDHHCRWLNNCIGKRNYRKFFSLMV). The active-site S-palmitoyl cysteine intermediate is the Cys193. 2 consecutive transmembrane segments (helical) span residues 215 to 235 (AIFLLIMQWSTGIFVLVLCLL) and 254 to 274 (LIPFVIVVGVCTVLAMLATLP). 3 disordered regions span residues 433 to 455 (SGRRMFPTKYEGVNNNGKQRRQS), 498 to 523 (QTSRAMSGSGNVMVTSSPESSLDSHD), and 549 to 596 (MGQQ…HKSR). Residues 498-518 (QTSRAMSGSGNVMVTSSPESS) are compositionally biased toward polar residues. Residues 549–571 (MGQQRGQQQQQQLSMMMMPLSRS) are compositionally biased toward low complexity.

Belongs to the DHHC palmitoyltransferase family.

The protein localises to the cell membrane. It is found in the cytoplasmic vesicle membrane. It catalyses the reaction L-cysteinyl-[protein] + hexadecanoyl-CoA = S-hexadecanoyl-L-cysteinyl-[protein] + CoA. Functionally, palmitoyl acyltransferase. In Arabidopsis thaliana (Mouse-ear cress), this protein is Probable protein S-acyltransferase 22 (PAT22).